The following is a 667-amino-acid chain: Probable potassium transport system protein Kup (667 aa).

12 helical membrane passes run 5-25 (GLLI…LYVM), 47-67 (ISLI…IIAL), 88-108 (AAWL…DGTL), 133-153 (VSNQ…LFSI), 164-184 (AFGP…LINI), 210-230 (AGFA…ALYS), 243-263 (SWPF…VWIL), 287-307 (LASI…LITG), 336-356 (IYIP…VLFF), 367-387 (GLSI…WLVL), 393-413 (LANL…MGSS), and 420-440 (GGYV…VWYF).

It belongs to the HAK/KUP transporter (TC 2.A.72) family.

The protein localises to the cell membrane. It catalyses the reaction K(+)(in) + H(+)(in) = K(+)(out) + H(+)(out). Its function is as follows. Transport of potassium into the cell. Likely operates as a K(+):H(+) symporter. In Lactobacillus delbrueckii subsp. bulgaricus (strain ATCC 11842 / DSM 20081 / BCRC 10696 / JCM 1002 / NBRC 13953 / NCIMB 11778 / NCTC 12712 / WDCM 00102 / Lb 14), this protein is Probable potassium transport system protein Kup.